Reading from the N-terminus, the 296-residue chain is GTPase Era (296 aa).

Residues 3–170 (KSGFVTIVGR…KELMFKYIPE (168 aa)) form the Era-type G domain. The G1 stretch occupies residues 11-18 (GRPNVGKS). 11 to 18 (GRPNVGKS) is a GTP binding site. The G2 stretch occupies residues 37-41 (QTTRN). Residues 58 to 61 (DTPG) are G3. Residues 58–62 (DTPGI) and 120–123 (NKID) each bind GTP. Positions 120 to 123 (NKID) are G4. The interval 149 to 151 (ISA) is G5. A KH type-2 domain is found at 201–278 (LSEEVPHGIA…YIRLWVKVKE (78 aa)).

It belongs to the TRAFAC class TrmE-Era-EngA-EngB-Septin-like GTPase superfamily. Era GTPase family. As to quaternary structure, monomer.

It localises to the cytoplasm. It is found in the cell membrane. In terms of biological role, an essential GTPase that binds both GDP and GTP, with rapid nucleotide exchange. Plays a role in 16S rRNA processing and 30S ribosomal subunit biogenesis and possibly also in cell cycle regulation and energy metabolism. This Clostridium botulinum (strain Langeland / NCTC 10281 / Type F) protein is GTPase Era.